A 305-amino-acid polypeptide reads, in one-letter code: MSSRYTPSEMAQALGAGLLSFPVTHFDADMAFDEPAYRSNLDWLSSHPAAGLFAAGGTGELFSLTLDEVDRAVRAAVTQTAGRMPVIAPAGYGTAIAVAMAQAAERNDADGILLFPPYLTECDADGVAEHVERVCKATSLGVIVYGRANARLDDVALARVAERCPNLVGYKDGIGDVERMTRIYARLGDRLLYVGGLPTAETFALPYLEMGVTTYSSAIFNFLPEWALSFYAAVRARDHATIYRELNDFVLPYTVLRNRRAGYAVSIVKAGMRAVGRPAGPVRTPLADLTEDEFAQLTQLIGGRR.

This sequence belongs to the DapA family.

The enzyme catalyses 5-dehydro-4-deoxy-D-glucarate + H(+) = 2,5-dioxopentanoate + CO2 + H2O. It functions in the pathway carbohydrate acid metabolism; D-glucarate degradation; 2,5-dioxopentanoate from D-glucarate: step 2/2. In Xanthomonas campestris pv. campestris (strain B100), this protein is Probable 5-dehydro-4-deoxyglucarate dehydratase.